Reading from the N-terminus, the 148-residue chain is Large ribosomal subunit protein bL9 (148 aa).

Belongs to the bacterial ribosomal protein bL9 family.

Its function is as follows. Binds to the 23S rRNA. The chain is Large ribosomal subunit protein bL9 from Lachnoclostridium phytofermentans (strain ATCC 700394 / DSM 18823 / ISDg) (Clostridium phytofermentans).